A 477-amino-acid polypeptide reads, in one-letter code: Cytochrome b mRNA maturase bI3 (477 aa).

The interval 1-163 (MRLLKSHPLL…IPWIGQDIVE (163 aa)) is cytochrome b. Helical transmembrane passes span 32–52 (FGSLLACCLIIQIVTGVTLAM), 86–106 (ASAFFFLVYLHIGRGMYYGSY), 113–133 (VWAIGTVILILMMATAFLGYV), 142–162 (WGATVITNLISAIPWIGQDIV), and 166–186 (IITLIINLSFIAILFSIVVVY). Residues 164 to 477 (SKIITLIINL…YSTLNYPDAK (314 aa)) are maturase.

In the N-terminal section; belongs to the cytochrome b family. The protein in the C-terminal section; belongs to the LAGLIDADG endonuclease family.

It is found in the mitochondrion inner membrane. In terms of biological role, mitochondrial mRNA maturase required for splicing of intron 3 of the cytochrome b (cob) gene, containing its own coding sequence. The sequence is that of Cytochrome b mRNA maturase bI3 (bI3) from Neurospora crassa (strain ATCC 24698 / 74-OR23-1A / CBS 708.71 / DSM 1257 / FGSC 987).